The primary structure comprises 404 residues: 6-hydroxytryptophan 2,3-dioxygenase fscD (404 aa).

Heme b is bound at residue His341.

It belongs to the indoleamine 2,3-dioxygenase family. The cofactor is heme.

The protein operates within secondary metabolite biosynthesis. Functionally, 6-hydroxytryptophan 2,3-dioxygenase; part of the fragmented gene cluster that mediates the biosynthesis of fusarochromene, a tryptophan-derived metabolite closely related to a group of mycotoxins including fusarochromanone. Within the pathway, fscD is responsible of the cleavage of the pyrrole ring of 6-hydroxytryptophan. The first step of the pathway is the epimerization of L-tryptophan to D-tryptophan in the presence of the NRPS-like tryptophan epimerase fscC. D-tryptophan is subsequently hydroxylated by the tryptophan 6-hydroxylase fscE to yield 6-hydroxytryptophan. The pyrrole ring undergoes cleavaged by the tryptophan 2,3-dioxygenase fscD and is finally converted to 4-hydroxykyrunenine by the hydrolase fscH. The NRPS-like oxidoreductase fscA reduces the carboxyl group to primary alcohol and the DMATS-type prenyltransferase fscG performs prenylation, followed by the formation of a chromene ring catalyzed by the oxidoreductase fscI, which leads to desacetylfusarochromene. Epoxidation by fscF and rearrangement reactions of chromene double bonds convert compound desacetylfusarochromene to fusarochromanones. Although specific acetyltransferases were not found near the fsc gene cluster, several predicted enzymes containing the N-acetyltransferase superfamily domain are present in the genome of F.equiseti. These predicted enzymes may have the potential to convert desacetylfusarochromene to fusarochromene. This Fusarium equiseti (Fusarium scirpi) protein is 6-hydroxytryptophan 2,3-dioxygenase fscD.